Reading from the N-terminus, the 463-residue chain is Putative ankyrin repeat protein R579 (463 aa).

8 ANK repeats span residues 124 to 154, 156 to 181, 242 to 271, 273 to 299, 300 to 328, 329 to 355, 356 to 385, and 387 to 416; these read LKTDLMFYAVSKNVSIDVINFLIDMDCKCTI, SITRAIAEKKLDIAKIIIDHNPSENI, KEKNISSYVIQSNSLNVVKTFVEHGLQFNP, IYLWVNGNSESENIVRYIIELGIDYRP, HIDRLLKICITSGTFSHLEYLINLGVSQE, NINEAFLTAVSEDKFELIKYLIYMGAD, INYKNTIAASYTDNIDVLKYLIEKGADITT, and GSNDVINHAIGSHQSDFCRCLLENGATITL.

The chain is Putative ankyrin repeat protein R579 from Acanthamoeba polyphaga (Amoeba).